A 452-amino-acid polypeptide reads, in one-letter code: MSLTVWNIESIKDVAEMLGIGNLADEPAAAIAMDLEYRIHQVVQEATKFMVHSKRTVLTSADISSALRTLNVEPLYGFNNSRPLEFHEAAVGAGQNSLYYLDDEEVDFEKIINAPLPKVPRNISYSAHWLAIEGVQPAIPQNPTPSDHTVGEWASKGTSGVMPGASTAAKEARNGVTSMDNVEIKPLVRHVLSKELQLYFERITSALLDETNVELRDAALSSLRDDPGLHQLLPYFIMFLSDSVTRNLGNLVVLTTLMHMAWALLDNPNLFVEPYVQQLMPSILTCLVAKRLGSDPNNHEHYALRDLAAFLLGIVCDRFGNVYYTLKPRVTRTALKAFLDNTKPYSTHYGAIKGLKTMGKEAIRVLVVPNIKVYEVLVRKTLEKGNEEEIYEANKCMDALYDALLLLRDDQLPNQRTLPPNASGLLEKNVGSLMAEKIMKENDTSLLLGLLE.

Positions 4 to 68 constitute a Histone-fold domain; it reads TVWNIESIKD…TSADISSALR (65 aa).

Belongs to the TAF6 family. In terms of assembly, component of the 1.8 MDa SAGA (Spt-Ada-Gcn5 acetyltransferase) complex, which is composed of 19 subunits tra1, spt7, taf5, ngg1/ada3, sgf73, spt20, spt8, taf12, taf6, hfi1/ada1, ubp8, gcn5, ada2, spt3, sgf29, taf10, taf9, sgf11 and sus1. The SAGA complex is composed of 4 modules, namely the HAT (histone acetyltransferase) module (gcn5, ada2, ngg1/ada3 and sgf29), the DUB (deubiquitinating) module (ubp8, sgf11, sgf73 and sus1), the core or TAF (TBP-associated factor) module (taf5, taf6, taf9, taf10 and taf12), and the Tra1 or SPT (Suppressor of Ty) module (tra1, hfi1/ada1, spt3, spt7, spt8 and spt20). The Tra1/SPT module binds activators, the core module recruits TBP (TATA-binding protein), the HAT module contains the histone H3 acetyltransferase gcn5, and the DUB module comprises the histone H2B deubiquitinase ubp8. Interacts with gcn5, taf5 and taf73. Component of the 1.2 MDa TFIID complex, which is composed of TATA-binding protein (TBP) and the 14 TBP-associated factors (TAFs). It comprises 1 copy of each taf1, taf2, taf3, taf7, taf8, taf11, taf13, 2 copies of each taf4, taf5, taf6, taf9, taf10, taf12, and 3 copies of taf14. In TFIID, taf6 heterodimerizes with taf9, forming ultimately an octamer consisting of a taf6-taf9 heterotetramer core flanked by taf4-taf12 dimers on either side, similar to the histone H2A-H2B-H3-H4 octamer.

It localises to the nucleus. Its function is as follows. Functions as a component of both the DNA-binding general transcription initiation factor complex TFIID and the transcription coactivator SAGA complex. Binding of TFIID to a promoter (with or without TATA element) is the initial step in pre-initiation complex (PIC) formation. TFIID plays a key role in the regulation of gene expression by RNA polymerase II through different activities such as transcription activator interaction, core promoter recognition and selectivity, TFIIA and TFIIB interaction, chromatin modification (histone acetylation by TAF1), facilitation of DNA opening and initiation of transcription. SAGA acts as a general cofactor required for essentially all RNA polymerase II transcription. At the promoters, SAGA is required for transcription pre-initiation complex (PIC) recruitment. It influences RNA polymerase II transcriptional activity through different activities such as TBP interaction (via core/TAF module) and promoter selectivity, interaction with transcription activators (via Tra1/SPT module), and chromatin modification through histone acetylation (via HAT module) and deubiquitination (via DUB module). SAGA preferentially acetylates histones H3 (to form H3K9ac, H3K14ac, H3K18ac and H3K23ac) and H2B and deubiquitinates histone H2B. SAGA interacts with DNA via upstream activating sequences (UASs). The polypeptide is SAGA complex/transcription factor TFIID complex subunit Taf6 (Schizosaccharomyces pombe (strain 972 / ATCC 24843) (Fission yeast)).